We begin with the raw amino-acid sequence, 166 residues long: Transcription antitermination protein NusB (166 aa).

A compositionally biased stretch (basic and acidic residues) spans 1–15 (MISDDSDRFNPRDPK). Residues 1-30 (MISDDSDRFNPRDPKPANAGKPSKSAKRRE) are disordered.

The protein belongs to the NusB family.

Involved in transcription antitermination. Required for transcription of ribosomal RNA (rRNA) genes. Binds specifically to the boxA antiterminator sequence of the ribosomal RNA (rrn) operons. The sequence is that of Transcription antitermination protein NusB from Pseudomonas fluorescens (strain ATCC BAA-477 / NRRL B-23932 / Pf-5).